The primary structure comprises 56 residues: Large ribosomal subunit protein uL30 (56 aa).

The protein belongs to the universal ribosomal protein uL30 family. Part of the 50S ribosomal subunit.

The polypeptide is Large ribosomal subunit protein uL30 (Nitratidesulfovibrio vulgaris (strain ATCC 29579 / DSM 644 / CCUG 34227 / NCIMB 8303 / VKM B-1760 / Hildenborough) (Desulfovibrio vulgaris)).